A 199-amino-acid polypeptide reads, in one-letter code: Fe/S biogenesis protein NfuA (199 aa).

C156 and C159 together coordinate [4Fe-4S] cluster.

This sequence belongs to the NfuA family. In terms of assembly, homodimer. [4Fe-4S] cluster serves as cofactor.

Functionally, involved in iron-sulfur cluster biogenesis. Binds a 4Fe-4S cluster, can transfer this cluster to apoproteins, and thereby intervenes in the maturation of Fe/S proteins. Could also act as a scaffold/chaperone for damaged Fe/S proteins. This Haemophilus ducreyi (strain 35000HP / ATCC 700724) protein is Fe/S biogenesis protein NfuA.